Reading from the N-terminus, the 228-residue chain is Mitochondrial assembly of ribosomal large subunit protein 1 (228 aa).

Positions 53-77 are disordered; it reads SLTRGLHHGPQPEERTAGDARLQPG.

The protein belongs to the Iojap/RsfS family. As to quaternary structure, associates with the mitochondrial ribosome large subunit (39S) via interaction with MRPL12 and/or MRPL14. The interaction generates steric hindrance that is expected to prevent premature association of the 28S and 39S ribosomal subunits. Identified in a complex composed of MALSU1, MIEF1 upstream open reading frame protein and NDUFAB1; within the trimeric complex, MIEF1 upstream open reading frame protein functions as a bridging scaffold that interacts with MALSU1 on one side, and with NDUFAB1 on the other side. Interacts with MRPL12 and MRPL14.

Its subcellular location is the mitochondrion matrix. Its function is as follows. Required for normal mitochondrial ribosome function and mitochondrial translation. May play a role in ribosome biogenesis by preventing premature association of the 28S and 39S ribosomal subunits. Interacts with mitochondrial ribosomal protein uL14m (MRPL14), probably blocking formation of intersubunit bridge B8, preventing association of the 28S and 39S ribosomal subunits. Addition to isolated mitochondrial ribosomal subunits partially inhibits translation, probably by interfering with the association of the 28S and 39S ribosomal subunits and the formation of functional ribosomes. May also participate in the assembly and/or regulation of the stability of the large subunit of the mitochondrial ribosome. May function as a ribosomal silencing factor. The sequence is that of Mitochondrial assembly of ribosomal large subunit protein 1 (Malsu1) from Mus musculus (Mouse).